Reading from the N-terminus, the 173-residue chain is YGVPEEPPPVPDTCGHVAEERVTQAFAELTTKLSELQENVTNTFHGCNHCPNGWVTSENKCFHVPLEKASWMVAHGVCARLDSRARLASIDAADQAVVEPLSSEKMWIGLSYDSANDAAVWADDSHSSHRNWYATQPDDESELCVLIKEDQYRQWHDYNCNDRYNFVCEIVLH.

Residue asparagine 39 is glycosylated (N-linked (GlcNAc...) asparagine). 3 cysteine pairs are disulfide-bonded: cysteine 47–cysteine 61, cysteine 78–cysteine 168, and cysteine 144–cysteine 160. The 120-residue stretch at proline 51–isoleucine 170 folds into the C-type lectin domain.

As to quaternary structure, homohexamer; disulfide-linked. As to expression, coelemic fluid.

Sugar-binding protein which recognizes specific carbohydrate structures and agglutinates a variety of animal cells by binding to cell-surface glycoproteins and glycolipids. Calcium-dependent lectin. Invertebrate lectins may be involved in defense functions. The polypeptide is Lectin BRA-2 (Megabalanus rosa (Acorn barnacle)).